Reading from the N-terminus, the 361-residue chain is S-adenosylmethionine decarboxylase proenzyme (361 aa).

Residues Glu-13 and Glu-16 contribute to the active site. Ser-73 serves as the catalytic Schiff-base intermediate with substrate; via pyruvic acid. The residue at position 73 (Ser-73) is a Pyruvic acid (Ser); by autocatalysis. Catalysis depends on Cys-87, which acts as the Proton donor; for catalytic activity. Active-site proton acceptor; for processing activity residues include Ser-236 and His-249.

This sequence belongs to the eukaryotic AdoMetDC family. Pyruvate is required as a cofactor. Is synthesized initially as an inactive proenzyme. Formation of the active enzyme involves a self-maturation process in which the active site pyruvoyl group is generated from an internal serine residue via an autocatalytic post-translational modification. Two non-identical subunits are generated from the proenzyme in this reaction, and the pyruvate is formed at the N-terminus of the alpha chain, which is derived from the carboxyl end of the proenzyme. The post-translation cleavage follows an unusual pathway, termed non-hydrolytic serinolysis, in which the side chain hydroxyl group of the serine supplies its oxygen atom to form the C-terminus of the beta chain, while the remainder of the serine residue undergoes an oxidative deamination to produce ammonia and the pyruvoyl group blocking the N-terminus of the alpha chain.

It carries out the reaction S-adenosyl-L-methionine + H(+) = S-adenosyl 3-(methylsulfanyl)propylamine + CO2. It functions in the pathway amine and polyamine biosynthesis; S-adenosylmethioninamine biosynthesis; S-adenosylmethioninamine from S-adenosyl-L-methionine: step 1/1. In Nicotiana tabacum (Common tobacco), this protein is S-adenosylmethionine decarboxylase proenzyme (SAMDC).